The chain runs to 440 residues: 23S rRNA (uracil(1939)-C(5))-methyltransferase RlmD (440 aa).

The segment at methionine 1–isoleucine 21 is disordered. One can recognise a TRAM domain in the interval proline 15–asparagine 73. [4Fe-4S] cluster is bound by residues cysteine 86, cysteine 92, cysteine 95, and cysteine 169. Residues glutamine 273, phenylalanine 302, asparagine 307, glutamate 323, aspartate 350, and aspartate 370 each contribute to the S-adenosyl-L-methionine site. Cysteine 396 (nucleophile) is an active-site residue.

The protein belongs to the class I-like SAM-binding methyltransferase superfamily. RNA M5U methyltransferase family. RlmD subfamily.

The catalysed reaction is uridine(1939) in 23S rRNA + S-adenosyl-L-methionine = 5-methyluridine(1939) in 23S rRNA + S-adenosyl-L-homocysteine + H(+). Its function is as follows. Catalyzes the formation of 5-methyl-uridine at position 1939 (m5U1939) in 23S rRNA. In Marinomonas sp. (strain MWYL1), this protein is 23S rRNA (uracil(1939)-C(5))-methyltransferase RlmD.